The following is a 722-amino-acid chain: Dual specificity tyrosine-phosphorylation-regulated kinase 2 (722 aa).

Residue serine 25 is modified to Phosphoserine. The interval 54 to 127 is disordered; the sequence is TTTSLNGNGN…SGELKCNTPM (74 aa). A compositionally biased stretch (low complexity) spans 66–119; the sequence is GNSNSNNNNNIGSPVSSSTTNSSNGGNERGSSTKSNSSSGSGSSGNSASSTGSG. In terms of domain architecture, Protein kinase spans 198-494; that stretch reads YEILEVIGKG…PDEAAHHEFL (297 aa). ATP is bound by residues 204-212 and lysine 227; that span reads IGKGSFGQV. The Proton acceptor role is filled by aspartate 324. A phosphotyrosine; by autocatalysis mark is found at tyrosine 356 and tyrosine 358. Disordered stretches follow at residues 494-519, 557-582, 624-643, and 679-722; these read LQPS…LNSV, TTKS…PDIK, GSGS…LPGT, and TTTH…FGRA. Positions 506–519 are enriched in low complexity; that stretch reads RMSSSSSSSGLNSV. Residues 557–576 are compositionally biased toward polar residues; that stretch reads TTKSRQQPPSQSHGHAQSNG. 2 stretches are compositionally biased toward low complexity: residues 626–635 and 689–707; these read GSTHHVSSAA and GQQQ…MSHS.

The protein belongs to the protein kinase superfamily. CMGC Ser/Thr protein kinase family. MNB/DYRK subfamily. Requires Mg(2+) as cofactor. Post-translationally, phosphorylated on serine/threonine residues.

The protein resides in the cytoplasm. It carries out the reaction L-seryl-[protein] + ATP = O-phospho-L-seryl-[protein] + ADP + H(+). The enzyme catalyses L-threonyl-[protein] + ATP = O-phospho-L-threonyl-[protein] + ADP + H(+). It catalyses the reaction L-tyrosyl-[protein] + ATP = O-phospho-L-tyrosyl-[protein] + ADP + H(+). Its activity is regulated as follows. Autophosphorylates on Tyr-356 and Tyr-358. Functionally, in vitro; can phosphorylate exogenous substrates on Ser and Thr residues. May have a physiological role in development being involved in cellular growth and differentiation. In Drosophila melanogaster (Fruit fly), this protein is Dual specificity tyrosine-phosphorylation-regulated kinase 2.